The primary structure comprises 330 residues: Major ferric iron-binding protein (330 aa).

The N-terminal stretch at 1 to 22 (MKTSIRYALLAAALTAATPALA) is a signal peptide. 4 residues coordinate Fe cation: H31, E79, Y217, and Y218.

The protein belongs to the bacterial solute-binding protein 1 family.

The protein localises to the periplasm. Functionally, this protein may be a central component in the iron-acquisition system. This is Major ferric iron-binding protein (fbp) from Neisseria gonorrhoeae.